Reading from the N-terminus, the 256-residue chain is Alcohol dehydrogenase (256 aa).

Residue 12–35 (FVAGLGGIGLDTSKELVKRDLKNL) coordinates NAD(+). Ser-140 is a binding site for substrate. Tyr-153 serves as the catalytic Proton acceptor.

It belongs to the short-chain dehydrogenases/reductases (SDR) family. In terms of assembly, homodimer.

It catalyses the reaction a primary alcohol + NAD(+) = an aldehyde + NADH + H(+). It carries out the reaction a secondary alcohol + NAD(+) = a ketone + NADH + H(+). The chain is Alcohol dehydrogenase (Adh) from Drosophila mauritiana (Fruit fly).